Consider the following 417-residue polypeptide: Methylthioribose-1-phosphate isomerase (417 aa).

The Proton donor role is filled by D285.

This sequence belongs to the eIF-2B alpha/beta/delta subunits family. MtnA subfamily.

Its subcellular location is the cytoplasm. It is found in the nucleus. The catalysed reaction is 5-(methylsulfanyl)-alpha-D-ribose 1-phosphate = 5-(methylsulfanyl)-D-ribulose 1-phosphate. The protein operates within amino-acid biosynthesis; L-methionine biosynthesis via salvage pathway; L-methionine from S-methyl-5-thio-alpha-D-ribose 1-phosphate: step 1/6. Functionally, catalyzes the interconversion of methylthioribose-1-phosphate (MTR-1-P) into methylthioribulose-1-phosphate (MTRu-1-P). This chain is Methylthioribose-1-phosphate isomerase, found in Lachancea thermotolerans (strain ATCC 56472 / CBS 6340 / NRRL Y-8284) (Yeast).